We begin with the raw amino-acid sequence, 237 residues long: MSSRQPLLDALGVELPDELLSLALTHRSYAYEHGGLPTNERLEFLGDAVLGLTITDALYHRHPDRTEGDLAKLRASVVNTQALADVARKLCDGGLGAHLLLGRGEANTGGADKSSILADGMESLLGAIYLQHGIDTAREVILRLFGALLDAAPTLGAGLDWKTSLQELTAARGMGAPSYLVTSTGPDHDKEFTAVVVVADTEYGTGVGRSKKEAEQKAAAATWKALDVLDSAAQTSA.

Residues 3–133 (SRQPLLDALG…LLGAIYLQHG (131 aa)) enclose the RNase III domain. Mg(2+) is bound at residue Glu-43. The active site involves Asp-47. Residues Asp-119 and Glu-122 each contribute to the Mg(2+) site. Glu-122 is a catalytic residue. In terms of domain architecture, DRBM spans 160–228 (DWKTSLQELT…AAATWKALDV (69 aa)).

It belongs to the ribonuclease III family. As to quaternary structure, homodimer. The cofactor is Mg(2+).

It is found in the cytoplasm. The enzyme catalyses Endonucleolytic cleavage to 5'-phosphomonoester.. Functionally, digests double-stranded RNA. Involved in the processing of primary rRNA transcript to yield the immediate precursors to the large and small rRNAs (23S and 16S). Processes some mRNAs, and tRNAs when they are encoded in the rRNA operon. Processes pre-crRNA and tracrRNA of type II CRISPR loci if present in the organism. In Mycolicibacterium paratuberculosis (strain ATCC BAA-968 / K-10) (Mycobacterium paratuberculosis), this protein is Ribonuclease 3.